We begin with the raw amino-acid sequence, 214 residues long: MSEREYFVEMDVRSVEAYELAKEWFDEVVFTKKLILDTEPDWDSLKEELRELRRTYGKVAVLLVTRKPSLIRTFKARNLKALLYVQGGDMRVNRMAIEAKVDALISPWLGRKDYGFDHTLAGMAGRRGVAIGFSLSPLLRANPYERALTLRFMAKVWELVRKYRVPRFITSSAESKWEVRGPRDLMSLGINIGMEIPEARASLNFHPRSLLSRL.

The protein belongs to the eukaryotic/archaeal RNase P protein component 3 family. Consists of a catalytic RNA component and at least 4-5 protein subunits.

The protein resides in the cytoplasm. It carries out the reaction Endonucleolytic cleavage of RNA, removing 5'-extranucleotides from tRNA precursor.. Its function is as follows. Part of ribonuclease P, a protein complex that generates mature tRNA molecules by cleaving their 5'-ends. This chain is Ribonuclease P protein component 3, found in Thermococcus gammatolerans (strain DSM 15229 / JCM 11827 / EJ3).